Here is a 200-residue protein sequence, read N- to C-terminus: Small ribosomal subunit protein uS4 (200 aa).

The interval 22-42 (TGKELEKRPYAPGPHGPNQRK) is disordered. The S4 RNA-binding domain maps to 92–152 (ARLDNLVYRM…EKSNSLVVVK (61 aa)).

It belongs to the universal ribosomal protein uS4 family. In terms of assembly, part of the 30S ribosomal subunit. Contacts protein S5. The interaction surface between S4 and S5 is involved in control of translational fidelity.

Its function is as follows. One of the primary rRNA binding proteins, it binds directly to 16S rRNA where it nucleates assembly of the body of the 30S subunit. With S5 and S12 plays an important role in translational accuracy. This Bacillus mycoides (strain KBAB4) (Bacillus weihenstephanensis) protein is Small ribosomal subunit protein uS4.